The primary structure comprises 378 residues: Mitogen-activated protein kinase mpkC (378 aa).

Residues 20–300 form the Protein kinase domain; sequence YVNPQPIGMG…AQDALRHPYL (281 aa). ATP-binding positions include 26–34 and lysine 49; that span reads IGMGSFGLV. The Proton acceptor role is filled by aspartate 141.

The protein belongs to the protein kinase superfamily. Ser/Thr protein kinase family. MAP kinase subfamily. Mg(2+) serves as cofactor.

The protein resides in the nucleus. It catalyses the reaction L-seryl-[protein] + ATP = O-phospho-L-seryl-[protein] + ADP + H(+). The catalysed reaction is L-threonyl-[protein] + ATP = O-phospho-L-threonyl-[protein] + ADP + H(+). Its activity is regulated as follows. Activated by threonine and tyrosine phosphorylation. Functionally, mitogen-activated protein kinase (MAPK), part of the high-osmolarity glycerol (HOG) pathway. With sakA, plays a role in the osmotic and oxidative stress responses. Involved in paradoxical growth, the cell wall integrity (CWI) pathway and biofilm formation. SakA and mpkC collaborate during virulence and mpkC could act by modulating sakA activity upon exposure to several types of stresses and during cell wall biosynthesis. This is Mitogen-activated protein kinase mpkC from Aspergillus fumigatus (strain CBS 144.89 / FGSC A1163 / CEA10) (Neosartorya fumigata).